Here is a 575-residue protein sequence, read N- to C-terminus: Amyloid-beta A4 precursor protein-binding family A member 3 (575 aa).

N-acetylmethionine is present on M1. Positions 1 to 10 are enriched in polar residues; sequence MDFPTISRSP. 2 disordered regions span residues 1 to 50 and 118 to 211; these read MDFP…LSRM and CEEC…GPCD. At S11 the chain carries Phosphoserine. Residues 143-153 are compositionally biased toward acidic residues; that stretch reads EDPDEDSDSPE. A compositionally biased stretch (low complexity) spans 156–184; it reads EGASAEQEGSRSSSSSPEPWLETVPLVTP. S171 is subject to Phosphoserine. Residues 215–364 form a required for interaction with NECAB3 region; that stretch reads LLDGVIFGAR…QFLRESGIDP (150 aa). Residues 217–381 enclose the PID domain; sequence DGVIFGARYL…SPGACHLHNG (165 aa). S372 is modified (phosphoserine). 2 consecutive PDZ domains span residues 394–480 and 485–560; these read EVHL…IVHC and TAII…TMPA.

In terms of assembly, binds to the cytoplasmic domain of amyloid protein (APP) in vivo. Interacts with HIF1AN (via N-terminus). Interacts with NECAB3; seems to mediate the interaction between NECAB3 and HIF1AN. Expressed in all tissues examined with lower levels in brain and testis.

It localises to the cytoplasm. Its subcellular location is the perinuclear region. Its function is as follows. May modulate processing of the amyloid-beta precursor protein (APP) and hence formation of APP-beta. May enhance the activity of HIF1A in macrophages by inhibiting the activity of HIF1AN. In Homo sapiens (Human), this protein is Amyloid-beta A4 precursor protein-binding family A member 3 (APBA3).